We begin with the raw amino-acid sequence, 295 residues long: Glycine--tRNA ligase alpha subunit (295 aa).

This sequence belongs to the class-II aminoacyl-tRNA synthetase family. Tetramer of two alpha and two beta subunits.

It is found in the cytoplasm. The catalysed reaction is tRNA(Gly) + glycine + ATP = glycyl-tRNA(Gly) + AMP + diphosphate. This Bacillus licheniformis (strain ATCC 14580 / DSM 13 / JCM 2505 / CCUG 7422 / NBRC 12200 / NCIMB 9375 / NCTC 10341 / NRRL NRS-1264 / Gibson 46) protein is Glycine--tRNA ligase alpha subunit.